The primary structure comprises 243 residues: Ubiquinone/menaquinone biosynthesis C-methyltransferase UbiE (243 aa).

Residues Thr-69, Asp-90, and Asp-116–Ala-117 each bind S-adenosyl-L-methionine.

This sequence belongs to the class I-like SAM-binding methyltransferase superfamily. MenG/UbiE family.

It catalyses the reaction a 2-demethylmenaquinol + S-adenosyl-L-methionine = a menaquinol + S-adenosyl-L-homocysteine + H(+). The enzyme catalyses a 2-methoxy-6-(all-trans-polyprenyl)benzene-1,4-diol + S-adenosyl-L-methionine = a 5-methoxy-2-methyl-3-(all-trans-polyprenyl)benzene-1,4-diol + S-adenosyl-L-homocysteine + H(+). The protein operates within quinol/quinone metabolism; menaquinone biosynthesis; menaquinol from 1,4-dihydroxy-2-naphthoate: step 2/2. It participates in cofactor biosynthesis; ubiquinone biosynthesis. In terms of biological role, methyltransferase required for the conversion of demethylmenaquinol (DMKH2) to menaquinol (MKH2) and the conversion of 2-polyprenyl-6-methoxy-1,4-benzoquinol (DDMQH2) to 2-polyprenyl-3-methyl-6-methoxy-1,4-benzoquinol (DMQH2). The polypeptide is Ubiquinone/menaquinone biosynthesis C-methyltransferase UbiE (Burkholderia multivorans (strain ATCC 17616 / 249)).